A 953-amino-acid polypeptide reads, in one-letter code: MVAAPCARRLARRSHSALLAALMVLLLHTLVVWNFSSLDSGAGEQRRAGAAAGAAEQQQPAAPRRERRDLAAHLPAARGGPGGRAGGGGARGGGPGGARAQQPASRGALASRARDPQPSPLITLETQDGYFSHRPKEKVRTDSNNENSVPKDFENVDNSNFAPRTQKQKHQPELAKKPPSRQKEHLQRKLDALDKRQGQSVLGKGPKEVLPPREKATGNSSQGKDLSRHSHARKSGGGGSPETKSDQAPKCDISGKEAISALTRAKSKHCRQEIAETYCRHKLGLLMPEKVARFCPLKGKAHKNVQWDEDAVEYMPANPVRIAFVLVVHGRAFRQFQRMSKAIYHKDHFYYIHVDKRSNYLHRQGLQFSRQYENVRVTSWKMATIWGGASFLSTYLQSMRDLLEMTDWPWDFFINLSAADYPIRTNDQLVAFLSRYRDMNFLKSHGRDNARFIRKQGLDRLFLECDTHMWRLGDRRIPEGIAVDGGSDWFLLNRKFVEYVAFSTDDLVTKMKQFYSYTLLPAESFFHTVLENSPHCDTMVDNNLRITNWNRKLGCKCQYKHIVDWCGCSPNDFKPQDFHRFQQTARPTFFARKFEAIVNQEIIGQLDSYLSGNFPAGTPGLRSYWEKLYDQSAPLRSLSDVALTMYHSFIRLGLRRAESSLHTDGENSCRYYPMGHPVSVHFYFLADRFQGFLIKHHVTNLAVSKLETLETWMMPKEVFKVASPPSDFGRLQFSEVGTDWDAKERLFRNFGGLLGPMDEPVGMQKWGKGPNVTVTVIWVDPVNVITATYDILIESTAEFTHYKPPLNLPLRPGVWTVKILHHWVPVAETKFLVAPLTFSNKQPIKPEEALKLHNGPPRSAYMEQSFQSLNPVLSLHINPAQVEQARKNAAFTGTALEAWLDSLVGGTWTAMDICTTGPTACPVMQTCSQTAWSSFSPDPKSELGAVKPDGRLR.

Residues 1–17 are Cytoplasmic-facing; sequence MVAAPCARRLARRSHSA. The chain crosses the membrane as a helical; Signal-anchor for type II membrane protein span at residues 18-38; the sequence is LLAALMVLLLHTLVVWNFSSL. At 39–953 the chain is on the lumenal side; sequence DSGAGEQRRA…GAVKPDGRLR (915 aa). Low complexity predominate over residues 48–62; the sequence is AGAAAGAAEQQQPAA. Disordered stretches follow at residues 48–67 and 74–251; these read AGAAAGAAEQQQPAAPRRER and LPAA…APKC. The segment covering 79 to 97 has biased composition (gly residues); that stretch reads GGPGGRAGGGGARGGGPGG. A compositionally biased stretch (basic and acidic residues) spans 138-154; sequence KVRTDSNNENSVPKDFE. Positions 156-165 are enriched in polar residues; that stretch reads VDNSNFAPRT. 2 stretches are compositionally biased toward basic and acidic residues: residues 170-197 and 205-216; these read HQPELAKKPPSRQKEHLQRKLDALDKRQ and GPKEVLPPREKA. Residue asparagine 219 is glycosylated (N-linked (GlcNAc...) asparagine). 4 cysteine pairs are disulfide-bonded: cysteine 251/cysteine 279, cysteine 295/cysteine 536, cysteine 555/cysteine 568, and cysteine 557/cysteine 566. UDP-alpha-D-xylose is bound by residues valine 327, aspartate 355, and 384 to 386; that span reads TIW. The N-linked (GlcNAc...) asparagine glycan is linked to asparagine 415. 488–489 contributes to the UDP-alpha-D-xylose binding site; the sequence is DW. UDP-alpha-D-xylose-binding positions include serine 569 and 592-593; that span reads RK. 2 disulfide bridges follow: cysteine 669/cysteine 921 and cysteine 914/cysteine 927. An N-linked (GlcNAc...) asparagine glycan is attached at asparagine 771. The interval 933 to 953 is disordered; that stretch reads SSFSPDPKSELGAVKPDGRLR.

The protein belongs to the glycosyltransferase 14 family. XylT subfamily. As to quaternary structure, monomer. The cofactor is a divalent metal cation. In terms of processing, contains 7 disulfide bonds. Post-translationally, N-glycosylated. In terms of tissue distribution, detected in brain, spleen, kidney and testis, and at low levels in skeletal muscle.

The protein localises to the golgi apparatus membrane. The catalysed reaction is UDP-alpha-D-xylose + L-seryl-[protein] = 3-O-(beta-D-xylosyl)-L-seryl-[protein] + UDP + H(+). Its pathway is glycan metabolism; chondroitin sulfate biosynthesis. The protein operates within glycan metabolism; heparan sulfate biosynthesis. In terms of biological role, catalyzes the first step in the biosynthesis of chondroitin sulfate and dermatan sulfate proteoglycans, such as DCN. Transfers D-xylose from UDP-D-xylose to specific serine residues of the core protein. Required for normal maturation of chondrocytes during bone development, normal onset of ossification and normal embryonic and postnatal skeleton development, especially of the long bones. In Mus musculus (Mouse), this protein is Xylosyltransferase 1 (Xylt1).